A 357-amino-acid polypeptide reads, in one-letter code: Putative electron transport protein YccM (357 aa).

Residues 1 to 36 (MAENKRTRWQRRPGTTGGKLPWNDWRNATTWRKATQ) lie on the Cytoplasmic side of the membrane. A helical membrane pass occupies residues 37–54 (LLLLAMNIYIAITFWYWV). The Periplasmic portion of the chain corresponds to 55-91 (RYYETASSTTFVARPGGIEGWLPIAGLMNLKYSLVTG). Residues 92–114 (QLPSVHAAAMLLLVAFIVISLLL) traverse the membrane as a helical segment. Topologically, residues 115–158 (KKAFCSWLCPVGTLSELIGDLGNKLFGRQCVLPRWLDIPLRGVK) are cytoplasmic. Residues 159–181 (YLLLSFFIYIALLMPAQAIHYFM) form a helical membrane-spanning segment. Residues 182–195 (LSPYSVVMDVKMLD) are Periplasmic-facing. Residues 196–218 (FFRHMGTATLISVTVLLIASLFI) form a helical membrane-spanning segment. Topologically, residues 219 to 309 (RHAWCRYLCP…KPAANKKAFA (91 aa)) are cytoplasmic. 4Fe-4S ferredoxin-type domains are found at residues 242–270 (FKIR…VDKL) and 269–299 (KLIQ…FSLQ). Positions 251, 254, 257, 261, 278, 281, 284, and 288 each coordinate [4Fe-4S] cluster. Residues 310-332 (LSGWLMTLLVLGIMFAVIGYAMY) traverse the membrane as a helical segment. Residues 333-357 (AGVWQSPVPEELYRRLIPQAPMIGH) lie on the Periplasmic side of the membrane.

The protein resides in the cell inner membrane. This chain is Putative electron transport protein YccM (yccM), found in Escherichia coli (strain K12).